Consider the following 690-residue polypeptide: Polyribonucleotide nucleotidyltransferase (690 aa).

Residues aspartate 482 and aspartate 488 each contribute to the Mg(2+) site. The KH domain occupies proline 549–isoleucine 608. An S1 motif domain is found at aspartate 618–lysine 686.

Belongs to the polyribonucleotide nucleotidyltransferase family. Component of the RNA degradosome, which is a multiprotein complex involved in RNA processing and mRNA degradation. It depends on Mg(2+) as a cofactor.

It localises to the cytoplasm. It catalyses the reaction RNA(n+1) + phosphate = RNA(n) + a ribonucleoside 5'-diphosphate. Its function is as follows. Involved in mRNA degradation. Catalyzes the phosphorolysis of single-stranded polyribonucleotides processively in the 3'- to 5'-direction. The sequence is that of Polyribonucleotide nucleotidyltransferase from Acidithiobacillus ferrooxidans (strain ATCC 23270 / DSM 14882 / CIP 104768 / NCIMB 8455) (Ferrobacillus ferrooxidans (strain ATCC 23270)).